Here is a 913-residue protein sequence, read N- to C-terminus: Anoctamin-5 (913 aa).

The Cytoplasmic portion of the chain corresponds to 1–299; sequence MGDPDLLEVL…DLIKNYYGEK (299 aa). A helical membrane pass occupies residues 300–320; sequence IGIYFVFLGFYTEMLFFAAVV. Residues 321–380 lie on the Extracellular side of the membrane; that stretch reads GLACFIYGLLSMEHNTSSTEICDPEIGGQMIMCPLCDQVCDYWRLNSTCLASKFSHLFDN. Residues Asn-335, Asn-366, and Asn-380 are each glycosylated (N-linked (GlcNAc...) asparagine). A helical transmembrane segment spans residues 381 to 401; the sequence is ESTVFFAIFMGIWVTLFLEFW. The Cytoplasmic portion of the chain corresponds to 402-462; that stretch reads KQRQARLEYE…YTRIPWYFLS (61 aa). The chain crosses the membrane as a helical span at residues 463–483; the sequence is GATVTLWMSLVVTSMVAVIVY. At 484-511 the chain is on the extracellular side; sequence RLSVFATFASFMESDASLKQVKSFLTPQ. Residues 512–532 traverse the membrane as a helical segment; it reads ITTSLTGSCLNFIVILILNFF. Residues 533–557 lie on the Cytoplasmic side of the membrane; the sequence is YEKISAWITKMEIPRTYQEYESSLT. A helical transmembrane segment spans residues 558 to 578; it reads LKMFLFQFVNFYSSCFYVAFF. Residues 579–679 are Extracellular-facing; the sequence is KGKFVGYPGK…FYEYLETVTQ (101 aa). A helical membrane pass occupies residues 680 to 700; it reads FGFVTLFVASFPLAPLLALIN. Residues 701-732 are Cytoplasmic-facing; it reads NIVEIRVDAWKLTTQYRRTVASKAHSIGVWQD. Residues 733–753 form a helical membrane-spanning segment; that stretch reads ILYGMAVLSVATNAFIVAFTS. At 754–834 the chain is on the extracellular side; sequence DIIPRLVYYY…FWHVLAAKMT (81 aa). Residues Asn-768, Asn-778, and Asn-791 are each glycosylated (N-linked (GlcNAc...) asparagine). A helical membrane pass occupies residues 835–855; that stretch reads FIIVMEHVVFLVKFLLAWMIP. At 856-913 the chain is on the cytoplasmic side; sequence DVPKDVVERIKREKLMTIKILHDFELNKLKENLGINSNEFAKHVMIEENKAQLAKSTL.

Belongs to the anoctamin family. As to expression, highly expressed in brain, heart, kidney, lung, and skeletal muscle. Weakly expressed in bone marrow, fetal liver, placenta, spleen, thymus, osteoblasts and periodontal ligament cells.

The protein localises to the endoplasmic reticulum membrane. Its subcellular location is the cell membrane. Functionally, plays a role in plasma membrane repair in a process involving annexins. Does not exhibit calcium-activated chloride channel (CaCC) activity. This chain is Anoctamin-5 (ANO5), found in Homo sapiens (Human).